The chain runs to 419 residues: Histidine--tRNA ligase (419 aa).

This sequence belongs to the class-II aminoacyl-tRNA synthetase family. In terms of assembly, homodimer.

It localises to the cytoplasm. It carries out the reaction tRNA(His) + L-histidine + ATP = L-histidyl-tRNA(His) + AMP + diphosphate + H(+). This chain is Histidine--tRNA ligase, found in Synechococcus sp. (strain JA-3-3Ab) (Cyanobacteria bacterium Yellowstone A-Prime).